We begin with the raw amino-acid sequence, 832 residues long: DNA polymerase I, thermostable (832 aa).

A 5'-3' exonuclease domain is found at 175-260 (RPDQWADYRA…DLPLEVDFAK (86 aa)). A polymerase region spans residues 410-832 (ERLFANLWGR…IGEDWLSAKE (423 aa)).

This sequence belongs to the DNA polymerase type-A family.

The catalysed reaction is DNA(n) + a 2'-deoxyribonucleoside 5'-triphosphate = DNA(n+1) + diphosphate. In addition to polymerase activity, this DNA polymerase exhibits 5'-3' exonuclease activity. Unlikely to have 3'-5' exonuclease activity due to absence of a 3'-5' exonuclease domain. In Thermus aquaticus, this protein is DNA polymerase I, thermostable (polA).